The primary structure comprises 205 residues: Probable GTP-binding protein EngB (205 aa).

Positions 29 to 203 (QGAEIAFIGR…KAVLSQWFRS (175 aa)) constitute an EngB-type G domain. Residues 37–44 (GRSNAGKS), 64–68 (GRTQM), 82–85 (DLPG), 149–152 (TKSD), and 182–184 (FSS) contribute to the GTP site. Positions 44 and 66 each coordinate Mg(2+).

Belongs to the TRAFAC class TrmE-Era-EngA-EngB-Septin-like GTPase superfamily. EngB GTPase family. Requires Mg(2+) as cofactor.

Necessary for normal cell division and for the maintenance of normal septation. The polypeptide is Probable GTP-binding protein EngB (Coxiella burnetii (strain RSA 331 / Henzerling II)).